The following is a 393-amino-acid chain: S-adenosylmethionine synthase (393 aa).

Glu-9 contacts Mg(2+). His-15 contacts ATP. Residue Glu-43 participates in K(+) binding. The L-methionine site is built by Glu-56 and Gln-99. ATP is bound by residues 167–169 (DGK), 235–238 (SGRF), Asp-246, 252–253 (RK), Ala-269, Lys-273, and Lys-277. Asp-246 serves as a coordination point for L-methionine. Lys-277 contacts L-methionine.

This sequence belongs to the AdoMet synthase family. In terms of assembly, homotetramer. It depends on Mn(2+) as a cofactor. Requires Mg(2+) as cofactor. Co(2+) serves as cofactor. The cofactor is K(+).

Its subcellular location is the cytoplasm. It carries out the reaction L-methionine + ATP + H2O = S-adenosyl-L-methionine + phosphate + diphosphate. Its pathway is amino-acid biosynthesis; S-adenosyl-L-methionine biosynthesis; S-adenosyl-L-methionine from L-methionine: step 1/1. Functionally, catalyzes the formation of S-adenosylmethionine from methionine and ATP. The reaction comprises two steps that are both catalyzed by the same enzyme: formation of S-adenosylmethionine (AdoMet) and triphosphate, and subsequent hydrolysis of the triphosphate. This is S-adenosylmethionine synthase (SAMS) from Brassica rapa subsp. pekinensis (Chinese cabbage).